The primary structure comprises 347 residues: 4-hydroxy-2-oxovalerate aldolase (347 aa).

One can recognise a Pyruvate carboxyltransferase domain in the interval 2-252 (ILISDATLRD…DTRTTFERVM (251 aa)). Residue 10-11 (RD) participates in substrate binding. Mn(2+) is bound at residue Asp-11. The Proton acceptor role is filled by His-14. Substrate contacts are provided by Ser-164 and His-191. Positions 191 and 193 each coordinate Mn(2+).

It belongs to the 4-hydroxy-2-oxovalerate aldolase family.

The enzyme catalyses (S)-4-hydroxy-2-oxopentanoate = acetaldehyde + pyruvate. This chain is 4-hydroxy-2-oxovalerate aldolase, found in Burkholderia pseudomallei (strain 1106a).